Consider the following 411-residue polypeptide: Acetyl-coenzyme A carboxylase carboxyl transferase subunit beta, chloroplastic (411 aa).

In terms of domain architecture, CoA carboxyltransferase N-terminal spans 32–302; sequence LWTRCDHCGV…KEQGRIPYGE (271 aa). Cys36, Cys39, Cys55, and Cys58 together coordinate Zn(2+). A C4-type zinc finger spans residues 36–58; that stretch reads CDHCGVILYIKHLKENQRVCFGC.

It belongs to the AccD/PCCB family. Acetyl-CoA carboxylase is a heterohexamer composed of biotin carboxyl carrier protein, biotin carboxylase and 2 subunits each of ACCase subunit alpha and ACCase plastid-coded subunit beta (accD). It depends on Zn(2+) as a cofactor.

Its subcellular location is the plastid. The protein resides in the chloroplast stroma. The enzyme catalyses N(6)-carboxybiotinyl-L-lysyl-[protein] + acetyl-CoA = N(6)-biotinyl-L-lysyl-[protein] + malonyl-CoA. Its pathway is lipid metabolism; malonyl-CoA biosynthesis; malonyl-CoA from acetyl-CoA: step 1/1. In terms of biological role, component of the acetyl coenzyme A carboxylase (ACC) complex. Biotin carboxylase (BC) catalyzes the carboxylation of biotin on its carrier protein (BCCP) and then the CO(2) group is transferred by the transcarboxylase to acetyl-CoA to form malonyl-CoA. This Chlorella vulgaris (Green alga) protein is Acetyl-coenzyme A carboxylase carboxyl transferase subunit beta, chloroplastic.